We begin with the raw amino-acid sequence, 197 residues long: Na(+)-translocating NADH-quinone reductase subunit E (197 aa).

Transmembrane regions (helical) follow at residues 11 to 31 (SVFI…FLAV), 35 to 55 (VSTA…SVPA), 76 to 96 (FLKF…LEMF), 108 to 128 (LGIY…VSFM), 139 to 159 (VVYG…LAGI), and 175 to 195 (LGIT…FSGI).

The protein belongs to the NqrDE/RnfAE family. As to quaternary structure, composed of six subunits; NqrA, NqrB, NqrC, NqrD, NqrE and NqrF.

The protein resides in the cell inner membrane. The enzyme catalyses a ubiquinone + n Na(+)(in) + NADH + H(+) = a ubiquinol + n Na(+)(out) + NAD(+). Its function is as follows. NQR complex catalyzes the reduction of ubiquinone-1 to ubiquinol by two successive reactions, coupled with the transport of Na(+) ions from the cytoplasm to the periplasm. NqrA to NqrE are probably involved in the second step, the conversion of ubisemiquinone to ubiquinol. The chain is Na(+)-translocating NADH-quinone reductase subunit E from Neisseria meningitidis serogroup A / serotype 4A (strain DSM 15465 / Z2491).